We begin with the raw amino-acid sequence, 255 residues long: Hydroxyacylglutathione hydrolase (255 aa).

Zn(2+)-binding residues include histidine 52, histidine 54, aspartate 56, histidine 57, histidine 109, aspartate 126, and histidine 166.

The protein belongs to the metallo-beta-lactamase superfamily. Glyoxalase II family. Monomer. Zn(2+) serves as cofactor.

The catalysed reaction is an S-(2-hydroxyacyl)glutathione + H2O = a 2-hydroxy carboxylate + glutathione + H(+). It functions in the pathway secondary metabolite metabolism; methylglyoxal degradation; (R)-lactate from methylglyoxal: step 2/2. In terms of biological role, thiolesterase that catalyzes the hydrolysis of S-D-lactoyl-glutathione to form glutathione and D-lactic acid. This Anaeromyxobacter dehalogenans (strain 2CP-C) protein is Hydroxyacylglutathione hydrolase.